Reading from the N-terminus, the 208-residue chain is Outer-membrane lipoprotein carrier protein (208 aa).

The first 25 residues, 1 to 25 (MKKRFSAKLFSALVLSISFFSAANA), serve as a signal peptide directing secretion.

Belongs to the LolA family. In terms of assembly, monomer.

Its subcellular location is the periplasm. In terms of biological role, participates in the translocation of lipoproteins from the inner membrane to the outer membrane. Only forms a complex with a lipoprotein if the residue after the N-terminal Cys is not an aspartate (The Asp acts as a targeting signal to indicate that the lipoprotein should stay in the inner membrane). In Vibrio parahaemolyticus serotype O3:K6 (strain RIMD 2210633), this protein is Outer-membrane lipoprotein carrier protein.